The primary structure comprises 591 residues: Probable translation initiation factor IF-2 (591 aa).

Residues 7–223 (LRTPIVCVMG…LLGLAQKFLE (217 aa)) enclose the tr-type G domain. Residues 16-23 (GHVDHGKT) are G1. 16–23 (GHVDHGKT) lines the GTP pocket. Residues 41–45 (AITQH) are G2. The interval 78-81 (DTPG) is G3. Residues 78-82 (DTPGH) and 132-135 (NKID) contribute to the GTP site. Positions 132-135 (NKID) are G4. The segment at 200 to 202 (SAF) is G5.

It belongs to the TRAFAC class translation factor GTPase superfamily. Classic translation factor GTPase family. IF-2 subfamily.

Its function is as follows. Function in general translation initiation by promoting the binding of the formylmethionine-tRNA to ribosomes. Seems to function along with eIF-2. This Methanosarcina mazei (strain ATCC BAA-159 / DSM 3647 / Goe1 / Go1 / JCM 11833 / OCM 88) (Methanosarcina frisia) protein is Probable translation initiation factor IF-2.